Reading from the N-terminus, the 455-residue chain is Probable glycine dehydrogenase (decarboxylating) subunit 1 (455 aa).

This sequence belongs to the GcvP family. N-terminal subunit subfamily. The glycine cleavage system is composed of four proteins: P, T, L and H. In this organism, the P 'protein' is a heterodimer of two subunits.

It carries out the reaction N(6)-[(R)-lipoyl]-L-lysyl-[glycine-cleavage complex H protein] + glycine + H(+) = N(6)-[(R)-S(8)-aminomethyldihydrolipoyl]-L-lysyl-[glycine-cleavage complex H protein] + CO2. In terms of biological role, the glycine cleavage system catalyzes the degradation of glycine. The P protein binds the alpha-amino group of glycine through its pyridoxal phosphate cofactor; CO(2) is released and the remaining methylamine moiety is then transferred to the lipoamide cofactor of the H protein. In Francisella tularensis subsp. holarctica (strain LVS), this protein is Probable glycine dehydrogenase (decarboxylating) subunit 1.